Reading from the N-terminus, the 690-residue chain is NF-kappa-B-repressing factor (690 aa).

Positions 1-296 are active repression domain; it reads MEKILQMAEG…FKHTFGEDLV (296 aa). The Nuclear localization signal motif lies at 25–45; that stretch reads KPSKGQKRHLSTCDGQNPPKK. 2 disordered regions span residues 27 to 87 and 132 to 163; these read SKGQ…NEQT and MYFD…QTFP. K68 is covalently cross-linked (Glycyl lysine isopeptide (Lys-Gly) (interchain with G-Cter in SUMO2)). Residues 142–163 are compositionally biased toward low complexity; sequence STTSQQANSQSTPEPSPSQTFP. Residues 296–388 mediate DNA binding; sequence VVCQIGMSSY…RVFLQDHCLA (93 aa). The segment covering 414–431 has biased composition (polar residues); sequence PTYPSVKSSQCHTGSSPR. Residues 414–437 are disordered; sequence PTYPSVKSSQCHTGSSPRGSGKKK. Residue K500 forms a Glycyl lysine isopeptide (Lys-Gly) (interchain with G-Cter in SUMO2) linkage. Positions 551-596 constitute a G-patch domain; the sequence is EDNIGNQLLRKMGWTGGGLGKSGEGIREPISVKEQHKREGLGLDVE. Residues 600 to 664 form the R3H domain; the sequence is KIAKRDIEQI…DRYLVVGRKR (65 aa). The residue at position 618 (S618) is a Phosphoserine. Residues K666 and K674 each participate in a glycyl lysine isopeptide (Lys-Gly) (interchain with G-Cter in SUMO2) cross-link.

As to quaternary structure, interacts with NF-kappa-B. Interacts with XRN2. Interacts (via G-patch domain) with DHX15; promoting the RNA helicase activity of DHX15. As to expression, widely and constitutively expressed. Expressed at lower level in colon, peripheral blood lymphocytes, lung and kidney.

It localises to the nucleus. The protein resides in the nucleolus. Enhances the ATPase activity of DHX15 by acting like a brace that tethers mobile sections of DHX15 together, stabilizing a functional conformation with high RNA affinity of DHX15. Involved in the constitutive silencing of the interferon beta promoter, independently of the virus-induced signals, and in the inhibition of the basal and cytokine-induced iNOS promoter activity. Also involved in the regulation of IL-8 transcription. May also act as a DNA-binding transcription regulator: interacts with a specific negative regulatory element (NRE) 5'-AATTCCTCTGA-3' to mediate transcriptional repression of certain NK-kappa-B responsive genes. This Homo sapiens (Human) protein is NF-kappa-B-repressing factor.